Consider the following 407-residue polypeptide: MSRKSNKQSNPKRNYKNDNYFQENSYTMTNGFTKDKDGKPVEFKKYHRRRKDPYDYSSDEEPFDEQFQNEIKKNIQKNFKKFGNNNFNPNFNPNFNPNFVPEFSSGFPTGFGPDFNFRNQEDSDSEYSDECLTDECSDNYNKQSTDSNKPKSYYIRRKKSGSKKSIPKESIPQQSVIGEKISENFDNTVPIPQNDTTNSQPKSPKPSKSKSSSKSSKSNKSNKSSKSNKSSKSSKSKSNKHSKHKNKSDSSSDSDEKTHKHKDRRHRRGRCTYPQFYDFIPPMPEIPGMPEMPDFFNQTPFNPNNPNFNCGCNQSRPRKSSHDRHKHHNKHKHHNGHHNNPHYHNNNLNFNTNNQFPFDANNFNNQLFSNIFDPNNFNPQNYQTYSGCPSCNVPNSNYGPNNFRPNY.

Disordered stretches follow at residues 1–64 (MSRK…EPFD), 110–276 (GFGP…YPQF), and 314–341 (QSRP…HNNP). Residues 7 to 32 (KQSNPKRNYKNDNYFQENSYTMTNGF) are compositionally biased toward polar residues. Positions 33–44 (TKDKDGKPVEFK) are enriched in basic and acidic residues. Over residues 122-137 (DSDSEYSDECLTDECS) the composition is skewed to acidic residues. Polar residues-rich tracts occupy residues 138–147 (DNYNKQSTDS) and 184–201 (NFDN…NSQP). Residues 209–231 (SKSSSKSSKSNKSNKSSKSNKSS) show a composition bias toward low complexity. Over residues 232-246 (KSSKSKSNKHSKHKN) the composition is skewed to basic residues. Over residues 247–258 (KSDSSSDSDEKT) the composition is skewed to basic and acidic residues. 2 stretches are compositionally biased toward basic residues: residues 259–270 (HKHKDRRHRRGR) and 316–341 (RPRK…HNNP).

This is an uncharacterized protein from Acanthamoeba polyphaga mimivirus (APMV).